The sequence spans 261 residues: Calbindin (261 aa).

Alanine 2 is modified (N-acetylalanine). Residues 2–7 (AESHLQ) are interaction with RANBP9. EF-hand domains lie at 11-46 (ITAS…LLQA), 53-88 (ELSP…EENF), 98-133 (KSCE…LLEK), 142-177 (KLAE…QENF), and 186-221 (MCGK…LCEK). Residues aspartate 24, aspartate 26, serine 28, tyrosine 30, and glutamate 35 each contribute to the Ca(2+) site. Aspartate 111, aspartate 113, serine 115, glutamate 122, aspartate 155, asparagine 157, aspartate 159, lysine 161, glutamate 166, aspartate 199, aspartate 201, asparagine 203, tyrosine 205, and glutamate 210 together coordinate Ca(2+).

This sequence belongs to the calbindin family. As to quaternary structure, interacts with RANBP9.

Buffers cytosolic calcium. May stimulate a membrane Ca(2+)-ATPase and a 3',5'-cyclic nucleotide phosphodiesterase. This Rattus norvegicus (Rat) protein is Calbindin (Calb1).